A 106-amino-acid chain; its full sequence is Iron-sulfur cluster assembly protein CyaY (106 aa).

This sequence belongs to the frataxin family.

In terms of biological role, involved in iron-sulfur (Fe-S) cluster assembly. May act as a regulator of Fe-S biogenesis. This Escherichia coli (strain SMS-3-5 / SECEC) protein is Iron-sulfur cluster assembly protein CyaY.